The chain runs to 356 residues: Peritrophin-44 (356 aa).

The N-terminal stretch at 1–23 is a signal peptide; it reads MKELQITTGCLLLMVAAIGKTSA. Chitin-binding type-2 domains follow at residues 28–85, 88–146, 147–201, 220–283, and 286–355; these read SETC…KCIS, KNAC…ECTA, DSIC…PCLA, NFVC…PCTF, and CGNL…YKLC. Residues Cys-62 and Cys-75 are joined by a disulfide bond. Asn-114 carries N-linked (GlcNAc...) asparagine glycosylation. Intrachain disulfides connect Cys-122–Cys-135, Cys-181–Cys-193, and Cys-262–Cys-273. Residue Asn-309 is glycosylated (N-linked (GlcNAc...) asparagine).

In terms of processing, glycosylated. Larval peritrophic membrane.

In terms of biological role, may have roles in the maintenance of peritrophic membrane structure and in the determination of the porosity of the peritrophic membrane. May bind chitin or related oligosaccharide structures. This is Peritrophin-44 from Lucilia cuprina (Green bottle fly).